The sequence spans 188 residues: Protein GrpE (188 aa).

The interval 1–22 is disordered; sequence MADEQTLDTQNLDANQAPEASG.

The protein belongs to the GrpE family. As to quaternary structure, homodimer.

Its subcellular location is the cytoplasm. Participates actively in the response to hyperosmotic and heat shock by preventing the aggregation of stress-denatured proteins, in association with DnaK and GrpE. It is the nucleotide exchange factor for DnaK and may function as a thermosensor. Unfolded proteins bind initially to DnaJ; upon interaction with the DnaJ-bound protein, DnaK hydrolyzes its bound ATP, resulting in the formation of a stable complex. GrpE releases ADP from DnaK; ATP binding to DnaK triggers the release of the substrate protein, thus completing the reaction cycle. Several rounds of ATP-dependent interactions between DnaJ, DnaK and GrpE are required for fully efficient folding. This Pseudomonas fluorescens (strain ATCC BAA-477 / NRRL B-23932 / Pf-5) protein is Protein GrpE.